The following is a 320-amino-acid chain: Mitochondrial glutamate carrier 2 (320 aa).

3 Solcar repeats span residues 11-97 (LSIS…LRQL), 105-215 (RNLK…LNQL), and 224-313 (ASFT…GIGE). Transmembrane regions (helical) follow at residues 17-37 (LING…IDLA), 66-86 (FLGM…EKAI), and 110-128 (EMLA…TCPM). S150 is modified (phosphoserine). The next 3 helical transmembrane spans lie at 190–210 (GLGA…PLFA), 230–250 (FVAG…LDVL), and 293–313 (ALVI…GIGE).

This sequence belongs to the mitochondrial carrier (TC 2.A.29) family.

It localises to the mitochondrion inner membrane. The catalysed reaction is L-glutamate(in) + H(+)(in) = L-glutamate(out) + H(+)(out). Its function is as follows. Responsible for the transport of glutamate from the cytosol into the mitochondrial matrix with the concomitant import of a proton (symport system). The polypeptide is Mitochondrial glutamate carrier 2 (Slc25a18) (Mus musculus (Mouse)).